The chain runs to 1004 residues: Hyaluronate lyase HylB (1004 aa).

An N-terminal signal peptide occupies residues 1 to 29 (MKNRKIWVMLVGLFTALTNGFMGTTLTFA). Residues His-468, Tyr-477, and Arg-531 contribute to the active site.

It belongs to the polysaccharide lyase 8 family.

It localises to the secreted. It carries out the reaction [hyaluronan](n) = n 3-(4-deoxy-beta-D-gluc-4-enuronosyl)-N-acetyl-D-glucosamine + H2O. The catalysed reaction is Eliminative degradation of polysaccharides containing 1,4-beta-D-hexosaminyl and 1,3-beta-D-glucuronosyl linkages to disaccharides containing 4-deoxy-beta-D-gluc-4-enuronosyl groups.. Degrades hyaluronic acid (HA) and chondroitin sulfate (CS) A in vitro. Is not active against heparin sodium salt (HS). Involved in the pathogenesis of vancomycin-resistant E.faecalis infections. Contributes to attenuation of the lipopolysaccharide (LPS)-mediated nuclear factor (NF)-kappa-B activation assayed in the mouse RAW-Blue reporter macrophages. The chain is Hyaluronate lyase HylB from Enterococcus faecalis (strain ATCC 700802 / V583).